We begin with the raw amino-acid sequence, 268 residues long: Interleukin-2 receptor subunit alpha (268 aa).

Positions 1–21 (MEPRLLMLGFLSLTIVPSCRA) are cleaved as a signal peptide. The Sushi 1 domain maps to 22–79 (ELCLYDPPEVPNATFKALSYKNGTILNCECKRGFRRLKELVYMRCLGNSWSSNCQCTS). Over 22 to 236 (ELCLYDPPEV…ETFVLTMEYK (215 aa)) the chain is Extracellular. 3 disulfides stabilise this stretch: C24–C66, C49–C75, and C51–C77. N-linked (GlcNAc...) asparagine glycosylation is found at N33 and N43. The tract at residues 86 to 109 (RKQVTAQLEHQKEQQTTTDMQKPT) is disordered. Residues 88–109 (QVTAQLEHQKEQQTTTDMQKPT) show a composition bias toward polar residues. N-linked (GlcNAc...) asparagine glycosylation occurs at N116. A Sushi 2 domain is found at 119–182 (GHCREPPPWK…WTQPQLTCVD (64 aa)). 2 disulfides stabilise this stretch: C121-C164 and C148-C180. The disordered stretch occupies residues 189–219 (FLASEESQGSRNSSPESETSCPITTTDFPQP). Polar residues predominate over residues 193-211 (EESQGSRNSSPESETSCPI). Residues 237–257 (VAVASCLFLLISILLLSGLTW) traverse the membrane as a helical segment. Topologically, residues 258–268 (QHRWRKSRRTI) are cytoplasmic.

In terms of assembly, non-covalent dimer of an alpha and a beta subunit. IL2R exists in 3 different forms: a high affinity dimer, an intermediate affinity monomer (beta subunit), and a low affinity monomer (alpha subunit). The high and intermediate affinity forms also associate with a gamma subunit.

The protein localises to the membrane. In terms of biological role, receptor for interleukin-2. The receptor is involved in the regulation of immune tolerance by controlling regulatory T cells (TREGs) activity. TREGs suppress the activation and expansion of autoreactive T-cells. The chain is Interleukin-2 receptor subunit alpha (Il2ra) from Mus musculus (Mouse).